The primary structure comprises 310 residues: Tagatose-6-phosphate kinase (310 aa).

The protein belongs to the carbohydrate kinase PfkB family. LacC subfamily.

The catalysed reaction is D-tagatofuranose 6-phosphate + ATP = D-tagatofuranose 1,6-bisphosphate + ADP + H(+). It functions in the pathway carbohydrate metabolism; D-tagatose 6-phosphate degradation; D-glyceraldehyde 3-phosphate and glycerone phosphate from D-tagatose 6-phosphate: step 1/2. The polypeptide is Tagatose-6-phosphate kinase (Staphylococcus epidermidis (strain ATCC 35984 / DSM 28319 / BCRC 17069 / CCUG 31568 / BM 3577 / RP62A)).